Consider the following 81-residue polypeptide: Small ribosomal subunit protein bS16 (81 aa).

It belongs to the bacterial ribosomal protein bS16 family.

The protein is Small ribosomal subunit protein bS16 of Acetivibrio thermocellus (strain ATCC 27405 / DSM 1237 / JCM 9322 / NBRC 103400 / NCIMB 10682 / NRRL B-4536 / VPI 7372) (Clostridium thermocellum).